The following is a 308-amino-acid chain: Putative S-adenosyl-L-methionine-dependent methyltransferase Mb3816c (308 aa).

S-adenosyl-L-methionine contacts are provided by residues aspartate 131 and 160–161; that span reads DL.

It belongs to the UPF0677 family.

Functionally, exhibits S-adenosyl-L-methionine-dependent methyltransferase activity. This is Putative S-adenosyl-L-methionine-dependent methyltransferase Mb3816c from Mycobacterium bovis (strain ATCC BAA-935 / AF2122/97).